A 59-amino-acid chain; its full sequence is UPF0509 protein KPN78578_12530 (59 aa).

The protein belongs to the UPF0509 family.

This is UPF0509 protein KPN78578_12530 from Klebsiella pneumoniae subsp. pneumoniae (strain ATCC 700721 / MGH 78578).